The primary structure comprises 209 residues: Protein GrpE (209 aa).

Basic and acidic residues predominate over residues 1 to 18 (MKIFNKDGNKNSKEDTKA). Positions 1–60 (MKIFNKDGNKNSKEDTKAGAENSEAQNSGSSAEEVNKARENPEEASASSEAEKSPEVKCQ) are disordered. The segment covering 23-33 (SEAQNSGSSAE) has biased composition (polar residues). Positions 50-60 (EAEKSPEVKCQ) are enriched in basic and acidic residues.

Belongs to the GrpE family. As to quaternary structure, homodimer.

It is found in the cytoplasm. In terms of biological role, participates actively in the response to hyperosmotic and heat shock by preventing the aggregation of stress-denatured proteins, in association with DnaK and GrpE. It is the nucleotide exchange factor for DnaK and may function as a thermosensor. Unfolded proteins bind initially to DnaJ; upon interaction with the DnaJ-bound protein, DnaK hydrolyzes its bound ATP, resulting in the formation of a stable complex. GrpE releases ADP from DnaK; ATP binding to DnaK triggers the release of the substrate protein, thus completing the reaction cycle. Several rounds of ATP-dependent interactions between DnaJ, DnaK and GrpE are required for fully efficient folding. This is Protein GrpE from Methanosarcina barkeri (strain Fusaro / DSM 804).